Here is a 723-residue protein sequence, read N- to C-terminus: Polyribonucleotide nucleotidyltransferase (723 aa).

Asp-488 and Asp-494 together coordinate Mg(2+). One can recognise a KH domain in the interval 555 to 614 (PRMITMKIHPDKIREVIGKGGSTIQALTKETGTTIDIQEDGTITIASTSTEGMAEAKRRI). Residues 624 to 692 (GKIYAGTVLK…EKGRLRLSLK (69 aa)) form the S1 motif domain. The disordered stretch occupies residues 701–723 (SISPINAGESAAPAAPAGGSEQQ). A compositionally biased stretch (low complexity) spans 707-723 (AGESAAPAAPAGGSEQQ).

It belongs to the polyribonucleotide nucleotidyltransferase family. Requires Mg(2+) as cofactor.

Its subcellular location is the cytoplasm. It catalyses the reaction RNA(n+1) + phosphate = RNA(n) + a ribonucleoside 5'-diphosphate. Its function is as follows. Involved in mRNA degradation. Catalyzes the phosphorolysis of single-stranded polyribonucleotides processively in the 3'- to 5'-direction. This chain is Polyribonucleotide nucleotidyltransferase, found in Cupriavidus taiwanensis (strain DSM 17343 / BCRC 17206 / CCUG 44338 / CIP 107171 / LMG 19424 / R1) (Ralstonia taiwanensis (strain LMG 19424)).